Here is an 862-residue protein sequence, read N- to C-terminus: DNA mismatch repair protein MutS (862 aa).

618-625 (GPNMGGKS) serves as a coordination point for ATP. Residues 799–824 (QLESRDNQASPAVASAPQQQSLSLSP) are disordered. A compositionally biased stretch (low complexity) spans 806-824 (QASPAVASAPQQQSLSLSP).

The protein belongs to the DNA mismatch repair MutS family.

This protein is involved in the repair of mismatches in DNA. It is possible that it carries out the mismatch recognition step. This protein has a weak ATPase activity. The chain is DNA mismatch repair protein MutS from Shewanella denitrificans (strain OS217 / ATCC BAA-1090 / DSM 15013).